Consider the following 158-residue polypeptide: 6,7-dimethyl-8-ribityllumazine synthase (158 aa).

5-amino-6-(D-ribitylamino)uracil contacts are provided by residues F22, 57–59, and 81–83; these read AFE and AVI. A (2S)-2-hydroxy-3-oxobutyl phosphate-binding site is contributed by 86 to 87; the sequence is GT. The active-site Proton donor is the H89. F114 contacts 5-amino-6-(D-ribitylamino)uracil. R128 lines the (2S)-2-hydroxy-3-oxobutyl phosphate pocket.

Belongs to the DMRL synthase family. Forms an icosahedral capsid composed of 60 subunits, arranged as a dodecamer of pentamers.

The catalysed reaction is (2S)-2-hydroxy-3-oxobutyl phosphate + 5-amino-6-(D-ribitylamino)uracil = 6,7-dimethyl-8-(1-D-ribityl)lumazine + phosphate + 2 H2O + H(+). It functions in the pathway cofactor biosynthesis; riboflavin biosynthesis; riboflavin from 2-hydroxy-3-oxobutyl phosphate and 5-amino-6-(D-ribitylamino)uracil: step 1/2. Its function is as follows. Catalyzes the formation of 6,7-dimethyl-8-ribityllumazine by condensation of 5-amino-6-(D-ribitylamino)uracil with 3,4-dihydroxy-2-butanone 4-phosphate. This is the penultimate step in the biosynthesis of riboflavin. In Shewanella amazonensis (strain ATCC BAA-1098 / SB2B), this protein is 6,7-dimethyl-8-ribityllumazine synthase.